Here is a 234-residue protein sequence, read N- to C-terminus: Phosphoribosylaminoimidazole-succinocarboxamide synthase (234 aa).

Belongs to the SAICAR synthetase family.

The enzyme catalyses 5-amino-1-(5-phospho-D-ribosyl)imidazole-4-carboxylate + L-aspartate + ATP = (2S)-2-[5-amino-1-(5-phospho-beta-D-ribosyl)imidazole-4-carboxamido]succinate + ADP + phosphate + 2 H(+). It functions in the pathway purine metabolism; IMP biosynthesis via de novo pathway; 5-amino-1-(5-phospho-D-ribosyl)imidazole-4-carboxamide from 5-amino-1-(5-phospho-D-ribosyl)imidazole-4-carboxylate: step 1/2. In Streptococcus agalactiae serotype III (strain NEM316), this protein is Phosphoribosylaminoimidazole-succinocarboxamide synthase.